We begin with the raw amino-acid sequence, 192 residues long: Probable nicotinate-nucleotide adenylyltransferase (192 aa).

This sequence belongs to the NadD family.

The enzyme catalyses nicotinate beta-D-ribonucleotide + ATP + H(+) = deamido-NAD(+) + diphosphate. Its pathway is cofactor biosynthesis; NAD(+) biosynthesis; deamido-NAD(+) from nicotinate D-ribonucleotide: step 1/1. Functionally, catalyzes the reversible adenylation of nicotinate mononucleotide (NaMN) to nicotinic acid adenine dinucleotide (NaAD). The chain is Probable nicotinate-nucleotide adenylyltransferase from Bradyrhizobium sp. (strain ORS 278).